Consider the following 216-residue polypeptide: U1 small nuclear ribonucleoprotein C (216 aa).

A Matrin-type zinc finger spans residues 4–36; the sequence is FFCDYCDVYLTHDSMSVRKAHNSGRNHLRNVVD. Disordered regions lie at residues 70–89 and 125–216; these read PQNQ…PGAG and PGGI…ADKR. Pro residues-rich tracts occupy residues 140 to 149 and 157 to 204; these read PPMPPFPGMP and GVPP…PPFG.

This sequence belongs to the U1 small nuclear ribonucleoprotein C family. As to quaternary structure, U1 snRNP is composed of the 7 core Sm proteins B/B', D1, D2, D3, E, F and G that assemble in a heptameric protein ring on the Sm site of the small nuclear RNA to form the core snRNP, and at least 3 U1 snRNP-specific proteins U1-70K, U1-A and U1-C. U1-C interacts with U1 snRNA and the 5' splice-site region of the pre-mRNA.

It localises to the nucleus. In terms of biological role, component of the spliceosomal U1 snRNP, which is essential for recognition of the pre-mRNA 5' splice-site and the subsequent assembly of the spliceosome. U1-C is directly involved in initial 5' splice-site recognition for both constitutive and regulated alternative splicing. The interaction with the 5' splice-site seems to precede base-pairing between the pre-mRNA and the U1 snRNA. Stimulates commitment or early (E) complex formation by stabilizing the base pairing of the 5' end of the U1 snRNA and the 5' splice-site region. The polypeptide is U1 small nuclear ribonucleoprotein C (Neurospora crassa (strain ATCC 24698 / 74-OR23-1A / CBS 708.71 / DSM 1257 / FGSC 987)).